Reading from the N-terminus, the 80-residue chain is Pigment-dispersing hormone peptides (80 aa).

Positions 1-20 are cleaved as a signal peptide; sequence MANYITIAIIVGIVCGQALS. The propeptide occupies 21–58; it reads VEDVDRNLLELNLPYGRGLDSELQLARLMLAAPRFCHP. Residue Ala-78 is modified to Alanine amide.

The protein belongs to the arthropod PDH family. In terms of tissue distribution, expressed in the brain (at protein level).

It localises to the secreted. In terms of biological role, neuropeptide PDF is the main transmitter regulating circadian locomotor rhythms. The chain is Pigment-dispersing hormone peptides from Camponotus floridanus (Florida carpenter ant).